A 590-amino-acid polypeptide reads, in one-letter code: Cytidine monophosphate-N-acetylneuraminic acid hydroxylase (590 aa).

The 99-residue stretch at 14–112 (LSPVEVASLK…VEMDENNRLL (99 aa)) folds into the Rieske domain. [2Fe-2S] cluster contacts are provided by Cys54, His56, Cys75, and His78.

Belongs to the CMP-Neu5Ac hydroxylase family. Requires [2Fe-2S] cluster as cofactor.

It is found in the cytoplasm. It carries out the reaction CMP-N-acetyl-beta-neuraminate + 2 Fe(II)-[cytochrome b5] + O2 + 2 H(+) = CMP-N-glycoloyl-beta-neuraminate + 2 Fe(III)-[cytochrome b5] + H2O. The protein operates within amino-sugar metabolism; N-acetylneuraminate metabolism. Its function is as follows. Sialic acids are components of carbohydrate chains of glycoconjugates and are involved in cell-cell recognition and cell-pathogen interactions. Catalyzes the conversion of CMP-N-acetylneuraminic acid (CMP-Neu5Ac) into its hydroxylated derivative CMP-N-glycolylneuraminic acid (CMP-Neu5Gc), a sialic acid abundantly expressed at the surface of many cells. The polypeptide is Cytidine monophosphate-N-acetylneuraminic acid hydroxylase (Pan troglodytes (Chimpanzee)).